Here is a 992-residue protein sequence, read N- to C-terminus: Vacuolar membrane protease (992 aa).

Over 1 to 24 (MSPAMANPRVRKFNPIAFTPLPVT) the chain is Cytoplasmic. A helical membrane pass occupies residues 25-45 (FITTIVYLAVLILVLVTYLVV). The Vacuolar segment spans residues 46–390 (PPAPTLEMSP…SAFAVFRLHT (345 aa)). N-linked (GlcNAc...) asparagine glycans are attached at residues asparagine 59, asparagine 115, and asparagine 118. Positions 174 and 186 each coordinate Zn(2+). The Proton acceptor role is filled by glutamate 220. Glutamate 221 contacts Zn(2+). Asparagine 237 carries N-linked (GlcNAc...) asparagine glycosylation. Glutamate 246 and histidine 319 together coordinate Zn(2+). Residues 391–411 (LFALSVTLLVIGPLVLFITSI) traverse the membrane as a helical segment. Residues 412–446 (ALSKTDRMYLFSMSKSLGGASETVSLRGLRGLFRT) are Cytoplasmic-facing. Residues 447-467 (PIILTVTTVISIGLAYLLEKI) form a helical membrane-spanning segment. Over 468-474 (NPYIVHS) the chain is Vacuolar. The helical transmembrane segment at 475 to 495 (SQFAVWSMMLSVWIFVAWFLA) threads the bilayer. Residues 496–508 (RVADFFRPSALHR) lie on the Cytoplasmic side of the membrane. Residues 509–529 (AYSYTWIFIVTWIMLVISTVY) form a helical membrane-spanning segment. The Vacuolar portion of the chain corresponds to 530-533 (ANQK). A helical membrane pass occupies residues 534 to 554 (GIAAGYFTFFYFAAVFLATWV). The Cytoplasmic segment spans residues 555–671 (SYLELFSLPR…WSWTLPRWTW (117 aa)). Positions 579-620 (RSSSLSSRLLTPSADELPSDIGPNGAENVGDPDETDPTESTS) are disordered. The helical transmembrane segment at 672–692 (ILQLLLLAPIVIILVGQVGLL) threads the bilayer. The Vacuolar segment spans residues 693–708 (LTTAMSQIGSDGVSTF). A helical membrane pass occupies residues 709-729 (IVYLACALFSTLLFAPLLPFI). At 730 to 736 (HRFTYHV) the chain is on the cytoplasmic side. Residues 737–757 (PIFLLLIFIGTLIYNLVAFPF) form a helical membrane-spanning segment. The Vacuolar portion of the chain corresponds to 758-992 (SPANRLKIFF…VEASHDFIIQ (235 aa)). Asparagine 805, asparagine 846, and asparagine 954 each carry an N-linked (GlcNAc...) asparagine glycan.

Belongs to the peptidase M28 family. Zn(2+) is required as a cofactor.

The protein localises to the vacuole membrane. Functionally, may be involved in vacuolar sorting and osmoregulation. This Paracoccidioides brasiliensis (strain Pb18) protein is Vacuolar membrane protease.